The primary structure comprises 312 residues: Ubiquinone biosynthesis O-methyltransferase, mitochondrial (312 aa).

A mitochondrion-targeting transit peptide spans 1–32; that stretch reads MLLRSRFLKVIHVRKQLSACSRFAIQTQTRCK. S-adenosyl-L-methionine contacts are provided by arginine 68, glycine 130, aspartate 153, and methionine 196. Residues glutamate 197, glutamate 200, and histidine 201 each coordinate Mg(2+).

It belongs to the class I-like SAM-binding methyltransferase superfamily. UbiG/COQ3 family. In terms of assembly, component of a multi-subunit COQ enzyme complex, composed of at least COQ3, COQ4, COQ5, COQ6, COQ7 and COQ9. Interacts directly with COQ4. Mg(2+) is required as a cofactor.

The protein localises to the mitochondrion inner membrane. It carries out the reaction 3,4-dihydroxy-5-(all-trans-hexaprenyl)benzoate + S-adenosyl-L-methionine = 4-hydroxy-3-methoxy-5-(all-trans-hexaprenyl)benzoate + S-adenosyl-L-homocysteine + H(+). The catalysed reaction is a 3-demethylubiquinone + S-adenosyl-L-methionine = a ubiquinone + S-adenosyl-L-homocysteine. It catalyses the reaction 3-demethylubiquinol-6 + S-adenosyl-L-methionine = ubiquinol-6 + S-adenosyl-L-homocysteine + H(+). It functions in the pathway cofactor biosynthesis; ubiquinone biosynthesis. Regulated in response to catabolite repression. O-methyltransferase required for two non-consecutive steps during ubiquinone biosynthesis. Catalyzes the 2 O-methylation of 3,4-dihydroxy-5-(all-trans-hexaprenyl)benzoic acid into 4-hydroxy-3-methoxy-5-(all-trans-hexaprenyl)benzoic acid. Also catalyzes the last step of ubiquinone biosynthesis by mediating methylation of 3-demethylubiquinone into ubiquinone. Also able to mediate the methylation of 3-demethylubiquinol-6 into ubiquinol-6. This is Ubiquinone biosynthesis O-methyltransferase, mitochondrial from Saccharomyces cerevisiae (strain ATCC 204508 / S288c) (Baker's yeast).